The chain runs to 831 residues: Glycerol-3-phosphate acyltransferase (831 aa).

The HXXXXD motif signature appears at 304-309; sequence CHRSHM. The disordered stretch occupies residues 801–831; sequence VSMPAETSNQPEAPETPETPETPEPEGKTES.

Belongs to the GPAT/DAPAT family.

It is found in the cell inner membrane. It catalyses the reaction sn-glycerol 3-phosphate + an acyl-CoA = a 1-acyl-sn-glycero-3-phosphate + CoA. Its pathway is phospholipid metabolism; CDP-diacylglycerol biosynthesis; CDP-diacylglycerol from sn-glycerol 3-phosphate: step 1/3. The sequence is that of Glycerol-3-phosphate acyltransferase from Yersinia pseudotuberculosis serotype IB (strain PB1/+).